We begin with the raw amino-acid sequence, 534 residues long: Glucose-6-phosphate isomerase (534 aa).

Residue Glu356 is the Proton donor of the active site. Residues His387 and Lys502 contribute to the active site.

This sequence belongs to the GPI family.

The protein resides in the cytoplasm. It carries out the reaction alpha-D-glucose 6-phosphate = beta-D-fructose 6-phosphate. It functions in the pathway carbohydrate biosynthesis; gluconeogenesis. Its pathway is carbohydrate degradation; glycolysis; D-glyceraldehyde 3-phosphate and glycerone phosphate from D-glucose: step 2/4. Functionally, catalyzes the reversible isomerization of glucose-6-phosphate to fructose-6-phosphate. This chain is Glucose-6-phosphate isomerase, found in Desulfotalea psychrophila (strain LSv54 / DSM 12343).